The chain runs to 479 residues: Poly(A) polymerase catalytic subunit (479 aa).

Residues aspartate 202 and aspartate 204 contribute to the active site. Ca(2+)-binding residues include aspartate 202, aspartate 204, and aspartate 253.

It belongs to the poxviridae poly(A) polymerase catalytic subunit family. In terms of assembly, heterodimer of a large (catalytic) subunit and a small (regulatory) subunit.

The catalysed reaction is RNA(n) + ATP = RNA(n)-3'-adenine ribonucleotide + diphosphate. Its function is as follows. Polymerase that creates the 3'-poly(A) tail of mRNA's. This Homo sapiens (Human) protein is Poly(A) polymerase catalytic subunit (OPG063).